The chain runs to 466 residues: Uronate isomerase (466 aa).

Belongs to the metallo-dependent hydrolases superfamily. Uronate isomerase family.

The catalysed reaction is D-glucuronate = D-fructuronate. The enzyme catalyses aldehydo-D-galacturonate = keto-D-tagaturonate. The protein operates within carbohydrate metabolism; pentose and glucuronate interconversion. This chain is Uronate isomerase, found in Streptococcus agalactiae serotype III (strain NEM316).